The sequence spans 179 residues: NADH-quinone oxidoreductase subunit B 1 (179 aa).

Residues C38, C39, C104, and C133 each contribute to the [4Fe-4S] cluster site.

This sequence belongs to the complex I 20 kDa subunit family. In terms of assembly, NDH-1 is composed of 14 different subunits. Subunits NuoB, C, D, E, F, and G constitute the peripheral sector of the complex. [4Fe-4S] cluster is required as a cofactor.

The protein resides in the cell membrane. The enzyme catalyses a quinone + NADH + 5 H(+)(in) = a quinol + NAD(+) + 4 H(+)(out). NDH-1 shuttles electrons from NADH, via FMN and iron-sulfur (Fe-S) centers, to quinones in the respiratory chain. The immediate electron acceptor for the enzyme in this species is believed to be ubiquinone. Couples the redox reaction to proton translocation (for every two electrons transferred, four hydrogen ions are translocated across the cytoplasmic membrane), and thus conserves the redox energy in a proton gradient. In Herpetosiphon aurantiacus (strain ATCC 23779 / DSM 785 / 114-95), this protein is NADH-quinone oxidoreductase subunit B 1.